Reading from the N-terminus, the 199-residue chain is Recombination protein RecR (199 aa).

The segment at 57 to 72 (CSICGNITEGDPCSIC) adopts a C4-type zinc-finger fold. Residues 80 to 176 (THVLVVEQPK…KVTRLAHGLS (97 aa)) enclose the Toprim domain.

It belongs to the RecR family.

May play a role in DNA repair. It seems to be involved in an RecBC-independent recombinational process of DNA repair. It may act with RecF and RecO. The sequence is that of Recombination protein RecR from Levilactobacillus brevis (strain ATCC 367 / BCRC 12310 / CIP 105137 / JCM 1170 / LMG 11437 / NCIMB 947 / NCTC 947) (Lactobacillus brevis).